A 315-amino-acid chain; its full sequence is Heme oxygenase 2 (315 aa).

Over residues Met-1–Glu-15 the composition is skewed to polar residues. A disordered region spans residues Met-1–Met-29. The residue at position 2 (Ser-2) is an N-acetylserine. A Phosphoserine modification is found at Ser-2. Residues Ser-2–Ser-294 lie on the Cytoplasmic side of the membrane. Residues His-44, Tyr-153, Lys-198, and Arg-202 each coordinate heme b. HRM repeat units follow at residues Lys-263–Ala-268 and Asn-280–Thr-285. Residues Cys-264 and Cys-281 each carry the S-nitrosocysteine modification. Residues Leu-295–Met-315 traverse the membrane as a helical; Anchor for type IV membrane protein segment.

It belongs to the heme oxygenase family. A soluble form arises by proteolytic removal of the membrane anchor. In terms of processing, S-nitrosylated by BLVRB. In terms of tissue distribution, widely distributed in body with a high concentration in the brain.

The protein localises to the microsome membrane. It is found in the endoplasmic reticulum membrane. The enzyme catalyses heme b + 3 reduced [NADPH--hemoprotein reductase] + 3 O2 = biliverdin IXalpha + CO + Fe(2+) + 3 oxidized [NADPH--hemoprotein reductase] + 3 H2O + H(+). Its activity is regulated as follows. Inhibited by metalloporphyrins such as Sn- and Zn-protoporphyrins. Functionally, catalyzes the oxidative cleavage of heme at the alpha-methene bridge carbon, released as carbon monoxide (CO), to generate biliverdin IXalpha, while releasing the central heme iron chelate as ferrous iron. The protein is Heme oxygenase 2 (Hmox2) of Rattus norvegicus (Rat).